A 470-amino-acid polypeptide reads, in one-letter code: 63 kDa sperm flagellar membrane protein (470 aa).

The N-terminal stretch at 1–25 (MFCHLHCMLVVFSLLLTLTGSFVNA) is a signal peptide. The EGF-like 1 domain maps to 41-80 (PPDPCASNPCTIASTHCVAAGESHTCECRPGYFETNGNCT). 3 disulfide bridges follow: Cys45–Cys57, Cys50–Cys66, and Cys68–Cys79. N-linked (GlcNAc...) asparagine glycans are attached at residues Asn78, Asn170, and Asn219. Residues 81 to 205 (VAQQFAGSFS…STITVSDFDE (125 aa)) enclose the SEA domain. In terms of domain architecture, EGF-like 2; calcium-binding spans 202 to 250 (DFDECASADDNDCDPNANCTNTAGSFTCECDTELYDNSPNTEEPGRVCI). 6 cysteine pairs are disulfide-bonded: Cys206-Cys220, Cys214-Cys229, Cys231-Cys249, Cys253-Cys265, Cys258-Cys277, and Cys279-Cys291. One can recognise an EGF-like 3 domain in the interval 249-292 (CIAPCDPGLCTRPNEICNNGGTIEDDNLCKCIEGYDYTQYGDCD). Residue Asn322 is glycosylated (N-linked (GlcNAc...) asparagine). Gly446 carries the GPI-anchor amidated glycine lipid modification. Residues 447-470 (SQRHLPVCGVLSLVVTTLLALMLH) constitute a propeptide, removed in mature form.

In terms of tissue distribution, sperm.

The protein localises to the cell projection. Its subcellular location is the cilium. The protein resides in the flagellum membrane. This chain is 63 kDa sperm flagellar membrane protein, found in Strongylocentrotus purpuratus (Purple sea urchin).